The following is a 1369-amino-acid chain: Rho-associated protein kinase 1 (1369 aa).

N-acetylserine is present on S2. The region spanning 76-338 is the Protein kinase domain; the sequence is YEVVKVIGRG…VEEIKRHLFF (263 aa). ATP contacts are provided by residues 82–90 and K105; that span reads IGRGAFGEV. The active-site Proton acceptor is the D198. The AGC-kinase C-terminal domain maps to 341–409; sequence DQWAWETLRD…YSNRRYLPSA (69 aa). The interval 368 to 727 is interaction with FHOD1; sequence FDDLEEDKGD…KKLKEEREAR (360 aa). A coiled-coil region spans residues 422–692; sequence KNVQESLQKT…RLEQEVNEHK (271 aa). An REM-1 domain is found at 479 to 556; that stretch reads SAVSQIEKEK…LEEANDLLRT (78 aa). Residues 707–946 are SHROOM3 binding; that stretch reads EAKSVAMCEM…TVSRLEEANN (240 aa). The RhoBD domain maps to 949–1015; sequence TKDIELLRKE…LAEIMNRKDF (67 aa). The segment at 998-1010 is RHOA binding; the sequence is LKTQAVNKLAEIM. Residues 1011–1102 adopt a coiled-coil conformation; that stretch reads NRKDFKIDRK…KLLDLSDSTS (92 aa). S1105 and S1108 each carry phosphoserine. Residues 1115–1369 form an auto-inhibitory region; it reads NLPVGSACIP…VVKNTSGKTS (255 aa). One can recognise a PH domain in the interval 1133 to 1332; that stretch reads SSRIEGWLSV…WVTHLVKKIP (200 aa). The Phorbol-ester/DAG-type zinc-finger motif lies at 1243–1298; sequence GHEFIPTLYHFPANCEACAKPLWHVFKPPPALECRRCHVKSHRDHLDKKEDLIPPC. At S1343 the chain carries Phosphoserine.

Belongs to the protein kinase superfamily. AGC Ser/Thr protein kinase family. In terms of assembly, homodimer. Interacts with GEM, MYLC2B, RHOE, LIMK1, LIMK2, TSG101, CHORDC1, DAPK3, PFN1, PTEN and JIP3. Interacts with FHOD1 in a Src-dependent manner. Interacts with ITGB1BP1 (via N-terminus and PTB domain). Interacts with RHOA (activated by GTP), RHOB, RHOC and PPP1R12A. Interacts with SHROOM3. Requires Mg(2+) as cofactor. Post-translationally, autophosphorylated on serine and threonine residues. Cleaved by caspase-3 during apoptosis. This leads to constitutive activation of the kinase and membrane blebbing. Highly expressed in brain, spleen, lung, liver, skeletal muscle, kidney and testis.

It localises to the cytoplasm. The protein localises to the cytoskeleton. The protein resides in the microtubule organizing center. It is found in the centrosome. Its subcellular location is the centriole. It localises to the golgi apparatus membrane. The protein localises to the cell projection. The protein resides in the bleb. It is found in the cell membrane. Its subcellular location is the lamellipodium. It localises to the ruffle. It catalyses the reaction L-seryl-[protein] + ATP = O-phospho-L-seryl-[protein] + ADP + H(+). It carries out the reaction L-threonyl-[protein] + ATP = O-phospho-L-threonyl-[protein] + ADP + H(+). Activated by RHOA binding. Inhibited by Y-27632. In terms of biological role, protein kinase which is a key regulator of the actin cytoskeleton and cell polarity. Involved in regulation of smooth muscle contraction, actin cytoskeleton organization, stress fiber and focal adhesion formation, neurite retraction, cell adhesion and motility via phosphorylation of DAPK3, GFAP, LIMK1, LIMK2, MYL9/MLC2, TPPP, PFN1 and PPP1R12A. Phosphorylates FHOD1 and acts synergistically with it to promote SRC-dependent non-apoptotic plasma membrane blebbing. Phosphorylates JIP3 and regulates the recruitment of JNK to JIP3 upon UVB-induced stress. Acts as a suppressor of inflammatory cell migration by regulating PTEN phosphorylation and stability. Acts as a negative regulator of VEGF-induced angiogenic endothelial cell activation. Required for centrosome positioning and centrosome-dependent exit from mitosis. Plays a role in terminal erythroid differentiation. Inhibits podocyte motility via regulation of actin cytoskeletal dynamics and phosphorylation of CFL1. Promotes keratinocyte terminal differentiation. Involved in osteoblast compaction through the fibronectin fibrillogenesis cell-mediated matrix assembly process, essential for osteoblast mineralization. May regulate closure of the eyelids and ventral body wall by inducing the assembly of actomyosin bundles. This is Rho-associated protein kinase 1 (Rock1) from Rattus norvegicus (Rat).